The following is a 136-amino-acid chain: Alpha-2-purothionin (136 aa).

The first 27 residues, Met-1–Gly-27, serve as a signal peptide directing secretion. 4 disulfides stabilise this stretch: Cys-30/Cys-66, Cys-31/Cys-58, Cys-39/Cys-56, and Cys-43/Cys-52. Positions Leu-73–Ala-136 are cleaved as a propeptide — acidic domain.

It belongs to the plant thionin (TC 1.C.44) family. 4 C-C subfamily.

The protein resides in the secreted. In terms of biological role, thionins are small plant proteins which are toxic to animal cells. They seem to exert their toxic effect at the level of the cell membrane. Their precise function is not known. The chain is Alpha-2-purothionin (THI1.2) from Triticum aestivum (Wheat).